Consider the following 427-residue polypeptide: MRELYLKTLKKEVVPSEGCTEPIAIAYAASIAAEYLKGEIKEVNIYLSKNVIKNALGVGIPGTGGVGIEIAAALGISIQKSYKKLTILSNFTEDELKKAKEIVDKNIINIKQKNTNKALYIEVELLSETSKAKVIIEDTHTNVTLIECDDEIIMDNNSEVSEDLEEDYNLFKIADIYNFAKEADFDDIKFILESAKMNEKVSEEGLKGDYGLQVGSKIIQKGNFNLFSNDASNKIIAASAAASDARMDGCAMPIMTTAGSGNQGIACSIPVAQTSRLLDKSEEELARALVLSNLVTIRIKKHMGRLSPLCGAGIAGATGASCGITYLLGGDLENINYCINNMISDLSGMICDGAKETCALKIATGTNAAIQCANLAINGISATANDGIVAKDVEETIESIETLIQNGFKNVDDTILNIMLEKKKNNK.

It belongs to the UPF0597 family.

The sequence is that of UPF0597 protein CPR_0790 from Clostridium perfringens (strain SM101 / Type A).